The primary structure comprises 445 residues: Methylenetetrahydrofolate--tRNA-(uracil-5-)-methyltransferase TrmFO (445 aa).

10–15 provides a ligand contact to FAD; the sequence is GGGLAG.

The protein belongs to the MnmG family. TrmFO subfamily. FAD serves as cofactor.

It is found in the cytoplasm. The catalysed reaction is uridine(54) in tRNA + (6R)-5,10-methylene-5,6,7,8-tetrahydrofolate + NADH + H(+) = 5-methyluridine(54) in tRNA + (6S)-5,6,7,8-tetrahydrofolate + NAD(+). The enzyme catalyses uridine(54) in tRNA + (6R)-5,10-methylene-5,6,7,8-tetrahydrofolate + NADPH + H(+) = 5-methyluridine(54) in tRNA + (6S)-5,6,7,8-tetrahydrofolate + NADP(+). Functionally, catalyzes the folate-dependent formation of 5-methyl-uridine at position 54 (M-5-U54) in all tRNAs. The chain is Methylenetetrahydrofolate--tRNA-(uracil-5-)-methyltransferase TrmFO from Microcystis aeruginosa (strain NIES-843 / IAM M-2473).